The sequence spans 211 residues: Large ribosomal subunit protein uL4 (211 aa).

Polar residues predominate over residues 41–53 (QAHSRQGTASTLT). Positions 41-85 (QAHSRQGTASTLTRAEVRGGGRKPYKQKGTGRARQGSIRTPLRPG) are disordered. Basic residues predominate over residues 60-71 (GGRKPYKQKGTG).

Belongs to the universal ribosomal protein uL4 family. In terms of assembly, part of the 50S ribosomal subunit.

One of the primary rRNA binding proteins, this protein initially binds near the 5'-end of the 23S rRNA. It is important during the early stages of 50S assembly. It makes multiple contacts with different domains of the 23S rRNA in the assembled 50S subunit and ribosome. Its function is as follows. Forms part of the polypeptide exit tunnel. This chain is Large ribosomal subunit protein uL4, found in Prochlorococcus marinus (strain SARG / CCMP1375 / SS120).